The sequence spans 488 residues: Probable cytochrome P450 6u1 (488 aa).

Cys430 is a heme binding site.

It belongs to the cytochrome P450 family. It depends on heme as a cofactor.

Its subcellular location is the endoplasmic reticulum membrane. The protein resides in the microsome membrane. May be involved in the metabolism of insect hormones and in the breakdown of synthetic insecticides. The sequence is that of Probable cytochrome P450 6u1 (Cyp6u1) from Drosophila melanogaster (Fruit fly).